The primary structure comprises 889 residues: DNA mismatch repair protein MutS (889 aa).

622–629 (GPNMAGKS) lines the ATP pocket. The interval 869–889 (QRVKRPEKAPADVTAETEDQE) is disordered.

This sequence belongs to the DNA mismatch repair MutS family.

Functionally, this protein is involved in the repair of mismatches in DNA. It is possible that it carries out the mismatch recognition step. This protein has a weak ATPase activity. The chain is DNA mismatch repair protein MutS from Desulfatibacillum aliphaticivorans.